A 444-amino-acid polypeptide reads, in one-letter code: 23S rRNA (uracil(1939)-C(5))-methyltransferase RlmD (444 aa).

Positions 5–67 (RNRFDRTPFQ…RHFDEAKTVE (63 aa)) constitute a TRAM domain. Residues C80, C86, C89, and C168 each coordinate [4Fe-4S] cluster. S-adenosyl-L-methionine-binding residues include Q276, F305, N310, E326, D353, and D374. C400 acts as the Nucleophile in catalysis.

This sequence belongs to the class I-like SAM-binding methyltransferase superfamily. RNA M5U methyltransferase family. RlmD subfamily.

The enzyme catalyses uridine(1939) in 23S rRNA + S-adenosyl-L-methionine = 5-methyluridine(1939) in 23S rRNA + S-adenosyl-L-homocysteine + H(+). In terms of biological role, catalyzes the formation of 5-methyl-uridine at position 1939 (m5U1939) in 23S rRNA. The polypeptide is 23S rRNA (uracil(1939)-C(5))-methyltransferase RlmD (Xanthomonas oryzae pv. oryzae (strain KACC10331 / KXO85)).